We begin with the raw amino-acid sequence, 96 residues long: Nucleoid-associated protein TC_0612 (96 aa).

Belongs to the YbaB/EbfC family. As to quaternary structure, homodimer.

It localises to the cytoplasm. The protein resides in the nucleoid. Functionally, binds to DNA and alters its conformation. May be involved in regulation of gene expression, nucleoid organization and DNA protection. In Chlamydia muridarum (strain MoPn / Nigg), this protein is Nucleoid-associated protein TC_0612.